Reading from the N-terminus, the 277-residue chain is Hemin import ATP-binding protein HmuV (277 aa).

Residues 25-260 (IHAQGLNLIL…DIIERVYGWP (236 aa)) enclose the ABC transporter domain. 57–64 (GPNGAGKS) is an ATP binding site.

It belongs to the ABC transporter superfamily. Heme (hemin) importer (TC 3.A.1.14.5) family. The complex is composed of two ATP-binding proteins (HmuV), two transmembrane proteins (HmuU) and a solute-binding protein (HmuT).

It localises to the cell inner membrane. Its function is as follows. Part of the ABC transporter complex HmuTUV involved in hemin import. Responsible for energy coupling to the transport system. In Photobacterium profundum (strain SS9), this protein is Hemin import ATP-binding protein HmuV.